The primary structure comprises 541 residues: MNAIVEQLKSTAAATKATDLRAAFAADSERFSRFSVSLDDLLMDFSKTAVNDDILKLLVKLAEEGGVEKKREEMFSGKVINFTEDRAVLHTALRNRSNTPVLVDGKDVMPDVNAVLAAMGKFADGVRSGALKGATGKAITDVINIGIGGSDLGPVMATLALAPFHDGPRAHFVSNIDGAHIADILKLVQPETTLFIVASKTFTTVETMTNAQTARNFIAKALGEAAVQHHFAAVSTALDKVAAFGIDSARVFGFWDWVGGRYSIWSAIGLPLMIAIGPENFGKFLDGAHAVDNHFRQAPITENLPMLLGLIGFYHRNVLEYPTRAILPYDQRLSRFPAYLQQLDMESNGKGVTINGTPVEGNSGPVVWGEPGTNGQHAFYQLIHQGTSIIPAEFMIAANAFEPELRHQHQLLISNVLAQSEALMKGRSFAEAKKQLTDKGMDDKKADFIAPHRVFTGNRPSITFVYDKLTPYALGRLIALYEHRVFVEGVLFRINSFDQWGVELGKELATGLLPVVEGKESAAGHDSSTQGLVAALSKLAK.

Glu346 serves as the catalytic Proton donor. Residues His377 and Lys506 contribute to the active site.

It belongs to the GPI family.

The protein localises to the cytoplasm. It catalyses the reaction alpha-D-glucose 6-phosphate = beta-D-fructose 6-phosphate. The protein operates within carbohydrate biosynthesis; gluconeogenesis. It participates in carbohydrate degradation; glycolysis; D-glyceraldehyde 3-phosphate and glycerone phosphate from D-glucose: step 2/4. Catalyzes the reversible isomerization of glucose-6-phosphate to fructose-6-phosphate. This is Glucose-6-phosphate isomerase from Rhizobium leguminosarum bv. trifolii (strain WSM2304).